We begin with the raw amino-acid sequence, 450 residues long: Phosphoglucosamine mutase (450 aa).

The Phosphoserine intermediate role is filled by Ser101. Mg(2+) is bound by residues Ser101, Asp241, Asp243, and Asp245. Residue Ser101 is modified to Phosphoserine.

This sequence belongs to the phosphohexose mutase family. Mg(2+) serves as cofactor. In terms of processing, activated by phosphorylation.

It carries out the reaction alpha-D-glucosamine 1-phosphate = D-glucosamine 6-phosphate. In terms of biological role, catalyzes the conversion of glucosamine-6-phosphate to glucosamine-1-phosphate. The protein is Phosphoglucosamine mutase of Lysinibacillus sphaericus (strain C3-41).